The following is a 478-amino-acid chain: Antiviral innate immune response effector IFIT1 (478 aa).

TPR repeat units follow at residues V52–E85, L95–P128, P139–N174, I183–N216, Y218–S249, and T251–S284. W147 serves as a coordination point for mRNA. G190 provides a ligand contact to RNA. RNA contacts are provided by K259, H289, Q290, and K336. TPR repeat units lie at residues A305–F339, E340–V373, Q378–S412, and L437–F470.

It belongs to the IFIT family. Component of an interferon-dependent multiprotein complex, at least composed of IFIT1, IFIT2 and IFIT3. Interacts (via TPR repeats 1-4) with RPL15. Interacts with STING1/MITA; could disrupt STING1 interaction with MAVS or TBK1, acting as a negative-feedback regulator of virus-triggered signaling. Interacts with EIF3E; this could be an alternative way to inhibit translation. Post-translationally, phosphorylated. In terms of processing, ISGylated.

The protein localises to the cytoplasm. Its function is as follows. Plays a key role in the innate immune response as part of an interferon-dependent multiprotein complex, recognizing and sequestering viral RNAs that lack host-specific 2'-O-methylation at their 5' cap. By distinguishing these RNAs from host mRNAs, inhibits their translation by competing with the translation initiation factor eIF4E. Could also prevent viral replication through its interaction with DNA replication origin-binding protein E1 of several viruses. Causes the translocation of E1 from the nucleus to the cytoplasm and can also inhibit its helicase activity in vitro. The chain is Antiviral innate immune response effector IFIT1 from Macaca fascicularis (Crab-eating macaque).